We begin with the raw amino-acid sequence, 238 residues long: tRNA (guanine-N(7)-)-methyltransferase (238 aa).

The span at 1-12 (MTDTAENQTPND) shows a compositional bias: polar residues. The tract at residues 1–20 (MTDTAENQTPNDRQAGHPRS) is disordered. The S-adenosyl-L-methionine site is built by Glu70, Asp95, Asp122, and Asp145. Residue Asp145 is part of the active site. Substrate contacts are provided by residues Lys149, Asp181, and 216 to 219 (TKFE).

This sequence belongs to the class I-like SAM-binding methyltransferase superfamily. TrmB family.

The catalysed reaction is guanosine(46) in tRNA + S-adenosyl-L-methionine = N(7)-methylguanosine(46) in tRNA + S-adenosyl-L-homocysteine. It participates in tRNA modification; N(7)-methylguanine-tRNA biosynthesis. Functionally, catalyzes the formation of N(7)-methylguanine at position 46 (m7G46) in tRNA. In Neisseria meningitidis serogroup C (strain 053442), this protein is tRNA (guanine-N(7)-)-methyltransferase.